The primary structure comprises 838 residues: 1,4-alpha-glucan branching enzyme GlgB 1 (838 aa).

A compositionally biased stretch (basic and acidic residues) spans 1 to 11; it reads MIPRPPSDDRA. Disordered stretches follow at residues 1 to 98 and 116 to 142; these read MIPR…VSKK and PVSP…SVLG. Over residues 29–57 the composition is skewed to low complexity; the sequence is KKAAAAKKTAGKKATPAAKATAAKGAVTK. Asp-513 functions as the Nucleophile in the catalytic mechanism. Glu-566 (proton donor) is an active-site residue. The segment at 793–822 is disordered; that stretch reads TDGARYGGSDVTNPHPVKPEPQGRHGRPAS.

This sequence belongs to the glycosyl hydrolase 13 family. GlgB subfamily. As to quaternary structure, monomer.

It carries out the reaction Transfers a segment of a (1-&gt;4)-alpha-D-glucan chain to a primary hydroxy group in a similar glucan chain.. The protein operates within glycan biosynthesis; glycogen biosynthesis. Catalyzes the formation of the alpha-1,6-glucosidic linkages in glycogen by scission of a 1,4-alpha-linked oligosaccharide from growing alpha-1,4-glucan chains and the subsequent attachment of the oligosaccharide to the alpha-1,6 position. This is 1,4-alpha-glucan branching enzyme GlgB 1 from Streptomyces avermitilis (strain ATCC 31267 / DSM 46492 / JCM 5070 / NBRC 14893 / NCIMB 12804 / NRRL 8165 / MA-4680).